The sequence spans 503 residues: Lithocholate 6-beta-hydroxylase (503 aa).

Cys442 is a heme binding site.

It belongs to the cytochrome P450 family. The cofactor is heme.

The protein localises to the endoplasmic reticulum membrane. Its subcellular location is the microsome membrane. It catalyses the reaction lithocholate + reduced [NADPH--hemoprotein reductase] + O2 = 6beta-hydroxylithocholate + oxidized [NADPH--hemoprotein reductase] + H2O + H(+). Functionally, catalyzes the 6 beta-hydroxylation of lithocholic acid and steroid hormones. The polypeptide is Lithocholate 6-beta-hydroxylase (CYP3A10) (Mesocricetus auratus (Golden hamster)).